The chain runs to 81 residues: MKTLLLTLLVVTIVCLDLASTMICYSHKTPQPSATITCEEKTCYKKSVRKLPAIVAGRGCGCPSKEMLVAIHCCRSDKCNE.

Positions 1–21 (MKTLLLTLLVVTIVCLDLAST) are cleaved as a signal peptide. 4 disulfides stabilise this stretch: C24-C43, C38-C60, C62-C73, and C74-C79.

This sequence belongs to the three-finger toxin family. Short-chain subfamily. Orphan group XI sub-subfamily. Expressed by the venom gland.

It is found in the secreted. Functionally, is cytotoxic against A549 cells (LC(50)=106 ug/ml). The protein is Toxin F-VIII of Dendroaspis angusticeps (Eastern green mamba).